Consider the following 616-residue polypeptide: Protein phosphatase EYA4 (616 aa).

The residue at position 1 (M1) is an N-acetylmethionine. 3 disordered regions span residues 1-66 (MEDT…VTTN), 186-211 (SQTQ…PGQT), and 277-345 (ADGT…DSDL). Residues K14 and K52 each participate in a glycyl lysine isopeptide (Lys-Gly) (interchain with G-Cter in SUMO2) cross-link. Low complexity predominate over residues 56-66 (SGLSSTSVTTN). Over residues 277–311 (ADGTSSSTSTYQLQESLQGLTSQPGEFDTVQSPST) the composition is skewed to polar residues. S338 is subject to Phosphoserine. D352 acts as the Nucleophile in catalysis. Mg(2+) is bound by residues D352, D354, and D580. D354 serves as the catalytic Proton donor.

Belongs to the HAD-like hydrolase superfamily. EYA family. Interacts with SIX3; translocates EYA4 from the cytoplasm to the nucleus and promotes activation of their target genes. Mg(2+) is required as a cofactor. As to expression, in the embryo, expressed mainly in the craniofacial mesenchyme, dermamyotome and limb.

It is found in the cytoplasm. It localises to the nucleus. The catalysed reaction is O-phospho-L-tyrosyl-[protein] + H2O = L-tyrosyl-[protein] + phosphate. In terms of biological role, tyrosine phosphatase that specifically dephosphorylates 'Tyr-142' of histone H2AX (H2AXY142ph). 'Tyr-142' phosphorylation of histone H2AX plays a central role in DNA repair and acts as a mark that distinguishes between apoptotic and repair responses to genotoxic stress. Promotes efficient DNA repair by dephosphorylating H2AX, promoting the recruitment of DNA repair complexes containing MDC1. Its function as histone phosphatase probably explains its role in transcription regulation during organogenesis. May be involved in development of the eye. The protein is Protein phosphatase EYA4 (Eya4) of Mus musculus (Mouse).